Consider the following 119-residue polypeptide: Large ribosomal subunit protein uL18 (119 aa).

It belongs to the universal ribosomal protein uL18 family. In terms of assembly, part of the 50S ribosomal subunit; part of the 5S rRNA/L5/L18/L25 subcomplex. Contacts the 5S and 23S rRNAs.

Its function is as follows. This is one of the proteins that bind and probably mediate the attachment of the 5S RNA into the large ribosomal subunit, where it forms part of the central protuberance. The sequence is that of Large ribosomal subunit protein uL18 from Clostridium botulinum (strain Langeland / NCTC 10281 / Type F).